The chain runs to 233 residues: 5'-methylthioadenosine/S-adenosylhomocysteine nucleosidase (233 aa).

The active-site Proton acceptor is the Glu12. Residues Gly78, Ile156, and 177–178 (ME) contribute to the substrate site. The active-site Proton donor is the Asp201.

Belongs to the PNP/UDP phosphorylase family. MtnN subfamily.

It carries out the reaction S-adenosyl-L-homocysteine + H2O = S-(5-deoxy-D-ribos-5-yl)-L-homocysteine + adenine. It catalyses the reaction S-methyl-5'-thioadenosine + H2O = 5-(methylsulfanyl)-D-ribose + adenine. The catalysed reaction is 5'-deoxyadenosine + H2O = 5-deoxy-D-ribose + adenine. It functions in the pathway amino-acid biosynthesis; L-methionine biosynthesis via salvage pathway; S-methyl-5-thio-alpha-D-ribose 1-phosphate from S-methyl-5'-thioadenosine (hydrolase route): step 1/2. Functionally, catalyzes the irreversible cleavage of the glycosidic bond in both 5'-methylthioadenosine (MTA) and S-adenosylhomocysteine (SAH/AdoHcy) to adenine and the corresponding thioribose, 5'-methylthioribose and S-ribosylhomocysteine, respectively. Also cleaves 5'-deoxyadenosine, a toxic by-product of radical S-adenosylmethionine (SAM) enzymes, into 5-deoxyribose and adenine. The protein is 5'-methylthioadenosine/S-adenosylhomocysteine nucleosidase of Listeria monocytogenes serotype 4b (strain F2365).